The primary structure comprises 804 residues: Probable phosphoketolase (804 aa).

Belongs to the XFP family. Thiamine diphosphate serves as cofactor.

The polypeptide is Probable phosphoketolase (Mycolicibacterium paratuberculosis (strain ATCC BAA-968 / K-10) (Mycobacterium paratuberculosis)).